Here is a 194-residue protein sequence, read N- to C-terminus: PBAN-type neuropeptides (194 aa).

The N-terminal stretch at 1–23 (MFNQTQLFVFLAVFTTSSVLGNN) is a signal peptide. Leucine amide is present on Leu47. Residues 51–94 (SLRISTEDNRQAFFKLLEAADALKYYYDQLPYEMQADEPETRVT) constitute a propeptide that is removed on maturation. A leucine amide mark is found at Leu103, Leu123, Leu159, and Leu169. A propeptide spanning residues 172 to 194 (ELSYDMMPNKIRVVRSTNKTRST) is cleaved from the precursor.

It belongs to the pyrokinin family. As to expression, expressed in the subesophageal ganglions. Not found in corpora cardiaca, corpora allata and thoracic ganglia.

It is found in the secreted. In terms of biological role, a hormone that controls sex pheromone production in females and pheromone responsiveness in male. Also mediates visceral muscle contractile activity (myotropic activity). In Helicoverpa zea (Corn earworm moth), this protein is PBAN-type neuropeptides.